Consider the following 252-residue polypeptide: Indole-3-glycerol phosphate synthase (252 aa).

This sequence belongs to the TrpC family.

It catalyses the reaction 1-(2-carboxyphenylamino)-1-deoxy-D-ribulose 5-phosphate + H(+) = (1S,2R)-1-C-(indol-3-yl)glycerol 3-phosphate + CO2 + H2O. It functions in the pathway amino-acid biosynthesis; L-tryptophan biosynthesis; L-tryptophan from chorismate: step 4/5. This chain is Indole-3-glycerol phosphate synthase, found in Leptospira interrogans serogroup Icterohaemorrhagiae serovar copenhageni (strain Fiocruz L1-130).